A 380-amino-acid chain; its full sequence is Cytochrome b (380 aa).

Transmembrane regions (helical) follow at residues 34–54 (FGSL…LLAM), 78–99 (WLIR…YLHI), 114–134 (WNTG…GYVL), and 179–199 (FFAL…IHLT). Heme b is bound by residues H84 and H98. Heme b is bound by residues H183 and H197. Position 202 (H202) interacts with a ubiquinone. 4 helical membrane-spanning segments follow: residues 227 to 247 (LKDI…ALFS), 289 to 309 (LGGV…PLLH), 321 to 341 (LSQL…WIGS), and 348 to 368 (FIII…VLFP).

The protein belongs to the cytochrome b family. As to quaternary structure, the cytochrome bc1 complex contains 11 subunits: 3 respiratory subunits (MT-CYB, CYC1 and UQCRFS1), 2 core proteins (UQCRC1 and UQCRC2) and 6 low-molecular weight proteins (UQCRH/QCR6, UQCRB/QCR7, UQCRQ/QCR8, UQCR10/QCR9, UQCR11/QCR10 and a cleavage product of UQCRFS1). This cytochrome bc1 complex then forms a dimer. It depends on heme b as a cofactor.

Its subcellular location is the mitochondrion inner membrane. Component of the ubiquinol-cytochrome c reductase complex (complex III or cytochrome b-c1 complex) that is part of the mitochondrial respiratory chain. The b-c1 complex mediates electron transfer from ubiquinol to cytochrome c. Contributes to the generation of a proton gradient across the mitochondrial membrane that is then used for ATP synthesis. The sequence is that of Cytochrome b (MT-CYB) from Oceanodroma melania (Black storm-petrel).